Consider the following 291-residue polypeptide: N-acetylmannosamine kinase (291 aa).

ATP-binding positions include 5–12 and 132–139; these read AIDIGGTK and GVGGGVVS. Zn(2+) is bound by residues His-156, Cys-166, Cys-168, and Cys-173.

The protein belongs to the ROK (NagC/XylR) family. NanK subfamily. In terms of assembly, homodimer.

The catalysed reaction is an N-acyl-D-mannosamine + ATP = an N-acyl-D-mannosamine 6-phosphate + ADP + H(+). The protein operates within amino-sugar metabolism; N-acetylneuraminate degradation; D-fructose 6-phosphate from N-acetylneuraminate: step 2/5. Functionally, catalyzes the phosphorylation of N-acetylmannosamine (ManNAc) to ManNAc-6-P. In Escherichia coli O9:H4 (strain HS), this protein is N-acetylmannosamine kinase.